The primary structure comprises 207 residues: Small ribosomal subunit protein uS4 (207 aa).

The segment covering 29-38 (SDKAKFDSKP) has biased composition (basic and acidic residues). Residues 29–54 (SDKAKFDSKPGQHGRTSGTRTSDYGL) are disordered. Polar residues predominate over residues 42–52 (GRTSGTRTSDY). The S4 RNA-binding domain maps to 97–160 (SRLDNVVYRM…KKQTRIAEAL (64 aa)).

Belongs to the universal ribosomal protein uS4 family. As to quaternary structure, part of the 30S ribosomal subunit. Contacts protein S5. The interaction surface between S4 and S5 is involved in control of translational fidelity.

Its function is as follows. One of the primary rRNA binding proteins, it binds directly to 16S rRNA where it nucleates assembly of the body of the 30S subunit. In terms of biological role, with S5 and S12 plays an important role in translational accuracy. The polypeptide is Small ribosomal subunit protein uS4 (Polaromonas naphthalenivorans (strain CJ2)).